Consider the following 691-residue polypeptide: Germ cell nuclear acidic protein (691 aa).

Residues 22–25 (ILNV) carry the SUMO interaction motif 1 (SIM) motif. Positions 25 to 488 (VQSSSDDTSG…GAAKVEKRKT (464 aa)) are disordered. Residues 27-36 (SSSDDTSGSS) show a composition bias toward low complexity. Positions 48–63 (CILNVQSRSGDTSGSS) are enriched in polar residues. Short sequence motifs (SUMO interaction motif 1 (SIM)) lie at residues 76 to 79 (VVVI), 97 to 100 (LLEI), and 121 to 124 (IVIS). Residues 86 to 97 (ECHTHEEKKAKL) are compositionally biased toward basic and acidic residues. The segment covering 124–333 (SDDDNDDDNG…VPDDNSDDLE (210 aa)) has biased composition (acidic residues). Over residues 467–488 (GHKKRGPSKKKPGAAKVEKRKT) the composition is skewed to basic residues. The SprT-like domain maps to 522–677 (VQRIYDLFNR…AKCKGSLVMV (156 aa)).

It belongs to the serine-aspartate repeat-containing protein (SDr) family. As to quaternary structure, interacts (via SIM domains) with SUMO2; this interaction allows the GCNA recruitment to DPCs sites. Interacts with TOP2A; this interaction allows the resolution of topoisomerase II (TOP2A) DNA-protein cross-links. As to expression, expressed in germ cells of the testis (at protein level). Detected in skeletal muscle, liver, kidney, pancreas, heart, lung and brain. Expressed throughout spermatogenesis, from spermatogonia to elongated spermatids, in normal adult testis (at protein level).

The protein localises to the nucleus. It is found in the PML body. It localises to the chromosome. Functionally, may play a role in DNA-protein cross-links (DPCs) clearance through a SUMO-dependent recruitment to sites of DPCs, ensuring the genomic stability by protecting germ cells and early embryos from various sources of damage. Can resolve the topoisomerase II (TOP2A) DPCs. This chain is Germ cell nuclear acidic protein, found in Homo sapiens (Human).